A 270-amino-acid chain; its full sequence is 4-hydroxy-tetrahydrodipicolinate reductase (270 aa).

NAD(+) is bound by residues 8–13 (GALGRM), D34, 102–104 (GTT), and 128–131 (SQNY). The active-site Proton donor/acceptor is the H160. A (S)-2,3,4,5-tetrahydrodipicolinate-binding site is contributed by H161. K164 functions as the Proton donor in the catalytic mechanism. (S)-2,3,4,5-tetrahydrodipicolinate is bound at residue 170 to 171 (GT).

It belongs to the DapB family.

The protein resides in the cytoplasm. The catalysed reaction is (S)-2,3,4,5-tetrahydrodipicolinate + NAD(+) + H2O = (2S,4S)-4-hydroxy-2,3,4,5-tetrahydrodipicolinate + NADH + H(+). It catalyses the reaction (S)-2,3,4,5-tetrahydrodipicolinate + NADP(+) + H2O = (2S,4S)-4-hydroxy-2,3,4,5-tetrahydrodipicolinate + NADPH + H(+). It participates in amino-acid biosynthesis; L-lysine biosynthesis via DAP pathway; (S)-tetrahydrodipicolinate from L-aspartate: step 4/4. Catalyzes the conversion of 4-hydroxy-tetrahydrodipicolinate (HTPA) to tetrahydrodipicolinate. This is 4-hydroxy-tetrahydrodipicolinate reductase from Methanococcus maripaludis (strain C5 / ATCC BAA-1333).